We begin with the raw amino-acid sequence, 104 residues long: Type VII secretion system extracellular protein B (104 aa).

The protein belongs to the WXG100 family. In terms of assembly, homodimer. When mixed with EsxA does not form heterodimers. Forms heterodimers with EsxD.

The protein localises to the secreted. In terms of biological role, virulence factor that is important for the establishment of infection in the host. EsxB is required for EsxA synthesis as well as secretion. Mediates together with EsxA the release of S.aureus from the host cell. Also inhibits host cytokine production and thus modulates dendritic cell-mediated immunity. This chain is Type VII secretion system extracellular protein B, found in Staphylococcus aureus (strain USA300).